Here is a 393-residue protein sequence, read N- to C-terminus: Ninja-family protein 1 (393 aa).

2 disordered regions span residues 1 to 27 (MEGF…PGQL) and 155 to 200 (NDDW…KEMN). Residues 156–170 (DDWKKRKEAQSLKRL) are compositionally biased toward basic and acidic residues.

This sequence belongs to the Ninja family.

It localises to the nucleus. In Zea mays (Maize), this protein is Ninja-family protein 1.